The primary structure comprises 223 residues: Killer cell lectin-like receptor subfamily B member 1B allele A (223 aa).

Residues 1-45 (MDTAVVYADLHLARTGEPKREPPPSLSPDTCQCPRWHRLALKLGC) lie on the Cytoplasmic side of the membrane. Residues 5–10 (VVYADL) carry the ITIM motif motif. The LCK-binding motif motif lies at 31 to 34 (CQCP). The helical; Signal-anchor for type II membrane protein transmembrane segment at 46 to 66 (ACLILLVLSVIGLGVLVLTLL) threads the bilayer. Residues 67-223 (QKPLIQNSPA…LKRESTCNDS (157 aa)) lie on the Extracellular side of the membrane. Residues 101-211 (HQDKCFHVSQ…CDSDNIWICQ (111 aa)) form the C-type lectin domain. 2 cysteine pairs are disulfide-bonded: Cys122-Cys210 and Cys189-Cys202.

As to quaternary structure, homodimer; disulfide-linked. Interacts with tyrosine kinase LCK. Binds PTPN6/SHP-1 in a phosphorylation-dependent manner. Expressed in a subset of natural killer cells.

The protein localises to the membrane. Receptor for CLEC2D/OCIL. Ligand-binding contributes to inhibition of cytotoxic natural killer (NK) cells. May mediate MHC class I-independent 'missing-self' recognition of allografts, tumor cells and virus-infected cells. This chain is Killer cell lectin-like receptor subfamily B member 1B allele A, found in Rattus norvegicus (Rat).